The following is a 75-amino-acid chain: Protein Tlp homolog (75 aa).

The tract at residues 53-75 is disordered; the sequence is REALDGMREEIKDEARDKKNGYM.

Belongs to the Tlp family.

The sequence is that of Protein Tlp homolog from Clostridium botulinum (strain ATCC 19397 / Type A).